A 138-amino-acid chain; its full sequence is MTAIFLMSVLFGLACGQAMSFCIPTEYMMHVERKECAYCLTINTTICAGYCMTRDFNGKLFLPKFALSQDVCTYRDFMYKTVEIPGCPHHVTPYFSYPVAVSCKCGKCDTDYSDCIQEAVKMNYCTKPQKPHVVGLSI.

A signal peptide spans Met-1–Ser-20. 6 disulfides stabilise this stretch: Cys-22-Cys-72, Cys-36-Cys-87, Cys-39-Cys-125, Cys-47-Cys-103, Cys-51-Cys-105, and Cys-108-Cys-115. Residue Asn-43 is glycosylated (N-linked (GlcNAc...) asparagine). A propeptide spanning residues Val-133 to Ile-138 is cleaved from the precursor.

The protein belongs to the glycoprotein hormones subunit beta family. Heterodimer of a common alpha chain and a unique beta chain which confers biological specificity to thyrotropin, lutropin, follitropin and gonadotropin.

Its subcellular location is the secreted. Its function is as follows. Indispensable for the control of thyroid structure and metabolism. The chain is Thyrotropin subunit beta (TSHB) from Lama glama (Llama).